The chain runs to 119 residues: Large ribosomal subunit protein bL17 (119 aa).

It belongs to the bacterial ribosomal protein bL17 family. As to quaternary structure, part of the 50S ribosomal subunit. Contacts protein L32.

This is Large ribosomal subunit protein bL17 from Mesoplasma florum (strain ATCC 33453 / NBRC 100688 / NCTC 11704 / L1) (Acholeplasma florum).